A 288-amino-acid chain; its full sequence is ATP synthase gamma chain (288 aa).

Belongs to the ATPase gamma chain family. As to quaternary structure, F-type ATPases have 2 components, CF(1) - the catalytic core - and CF(0) - the membrane proton channel. CF(1) has five subunits: alpha(3), beta(3), gamma(1), delta(1), epsilon(1). CF(0) has three main subunits: a, b and c.

Its subcellular location is the cell inner membrane. Functionally, produces ATP from ADP in the presence of a proton gradient across the membrane. The gamma chain is believed to be important in regulating ATPase activity and the flow of protons through the CF(0) complex. This Rickettsia prowazekii (strain Madrid E) protein is ATP synthase gamma chain.